A 243-amino-acid polypeptide reads, in one-letter code: Adenosine 5'-phosphosulfate reductase (243 aa).

4 residues coordinate [4Fe-4S] cluster: C126, C127, C209, and C212. C235 (nucleophile; cysteine thiosulfonate intermediate) is an active-site residue.

Belongs to the PAPS reductase family. CysH subfamily. [4Fe-4S] cluster is required as a cofactor.

The protein localises to the cytoplasm. The enzyme catalyses [thioredoxin]-disulfide + sulfite + AMP + 2 H(+) = adenosine 5'-phosphosulfate + [thioredoxin]-dithiol. Its pathway is sulfur metabolism; hydrogen sulfide biosynthesis; sulfite from sulfate. Its function is as follows. Catalyzes the formation of sulfite from adenosine 5'-phosphosulfate (APS) using thioredoxin as an electron donor. The protein is Adenosine 5'-phosphosulfate reductase of Staphylococcus epidermidis (strain ATCC 35984 / DSM 28319 / BCRC 17069 / CCUG 31568 / BM 3577 / RP62A).